A 366-amino-acid polypeptide reads, in one-letter code: Putative actin-9 (366 aa).

Belongs to the actin family. As to quaternary structure, polymerization of globular actin (G-actin) leads to a structural filament (F-actin) in the form of a two-stranded helix. The binding of profilin to monomeric G-actin cause the sequestration of actin into profilactin complexes, and prevents the polymerization.

The protein resides in the cytoplasm. Its subcellular location is the cytoskeleton. Functionally, actins are highly conserved proteins that are involved in various types of cell motility and are ubiquitously expressed in all eukaryotic cells. Essential component of cell cytoskeleton; plays an important role in cytoplasmic streaming, cell shape determination, cell division, organelle movement and extension growth. In Arabidopsis thaliana (Mouse-ear cress), this protein is Putative actin-9 (ACT9).